A 323-amino-acid polypeptide reads, in one-letter code: Beta-ketoacyl-[acyl-carrier-protein] synthase III (323 aa).

Catalysis depends on residues Cys-113 and His-250. The tract at residues Gln-251–Arg-255 is ACP-binding. Asn-280 is an active-site residue.

This sequence belongs to the thiolase-like superfamily. FabH family. In terms of assembly, homodimer.

The protein localises to the cytoplasm. It catalyses the reaction malonyl-[ACP] + acetyl-CoA + H(+) = 3-oxobutanoyl-[ACP] + CO2 + CoA. Its pathway is lipid metabolism; fatty acid biosynthesis. Functionally, catalyzes the condensation reaction of fatty acid synthesis by the addition to an acyl acceptor of two carbons from malonyl-ACP. Catalyzes the first condensation reaction which initiates fatty acid synthesis and may therefore play a role in governing the total rate of fatty acid production. Possesses both acetoacetyl-ACP synthase and acetyl transacylase activities. Its substrate specificity determines the biosynthesis of branched-chain and/or straight-chain of fatty acids. The polypeptide is Beta-ketoacyl-[acyl-carrier-protein] synthase III (Brucella canis (strain ATCC 23365 / NCTC 10854 / RM-666)).